The sequence spans 147 residues: Nucleoside diphosphate kinase (147 aa).

6 residues coordinate ATP: K9, F57, R85, T91, R102, and N112. At T91 the chain carries Phosphothreonine. The active-site Pros-phosphohistidine intermediate is H115. Residue S122 is modified to Phosphoserine.

It belongs to the NDK family. In terms of assembly, homotetramer. Mg(2+) serves as cofactor.

It localises to the cytoplasm. The catalysed reaction is a 2'-deoxyribonucleoside 5'-diphosphate + ATP = a 2'-deoxyribonucleoside 5'-triphosphate + ADP. It catalyses the reaction a ribonucleoside 5'-diphosphate + ATP = a ribonucleoside 5'-triphosphate + ADP. Functionally, major role in the synthesis of nucleoside triphosphates other than ATP. The ATP gamma phosphate is transferred to the NDP beta phosphate via a ping-pong mechanism, using a phosphorylated active-site intermediate. The polypeptide is Nucleoside diphosphate kinase (Halalkalibacterium halodurans (strain ATCC BAA-125 / DSM 18197 / FERM 7344 / JCM 9153 / C-125) (Bacillus halodurans)).